The sequence spans 509 residues: MSVIRALHRQLVTKERSAEEIAREYLERLAQLEPQLKSFITVTEELALQQAKAVDARIRAGEEIGPLAGIPLAVKDNLCTQGIRTTCASRMLEGFIPPYESTVTARLAAAGMVTVGKTNLDEFAMGSSTENSAFQRTANPWDLTRVPGGSSGGSAAAVAADQAVVALGSDTGGSIRQPAAFCGVVGLKPTYGLVSRYGLVAFASSLDQVGPFGRTVEDVALLLQGIAGHDPLDSTSLKVEIPDYSQALIPEIKGFKIGVIRDLLGEGCGEETRAAVQAAIQHLEELGAEILEIDCPSFRYGLATYYIIAPSEASSNLARYDGVKYGLREPADSLLAMYGKTRARGFGPEVKRRIMIGTYALSAGYYDAYYLKAQKVRTLIKQDFLRAFEKVDVLVSPTTPTPAFKAGEREDPLSMYLCDLMTIPVNLAGLPGLSLPCGFANGLPIGLQIIGNVLQESKVLRVAYAYEQSTDWHKRRPPLGQPPLEQAQGTAQQPKAKSKSTKGSKKSKS.

Residues lysine 75 and serine 150 each act as charge relay system in the active site. The active-site Acyl-ester intermediate is serine 174. Residues 471 to 509 (DWHKRRPPLGQPPLEQAQGTAQQPKAKSKSTKGSKKSKS) form a disordered region. Residues 496-509 (AKSKSTKGSKKSKS) show a composition bias toward basic residues.

It belongs to the amidase family. GatA subfamily. In terms of assembly, heterotrimer of A, B and C subunits.

The catalysed reaction is L-glutamyl-tRNA(Gln) + L-glutamine + ATP + H2O = L-glutaminyl-tRNA(Gln) + L-glutamate + ADP + phosphate + H(+). Its function is as follows. Allows the formation of correctly charged Gln-tRNA(Gln) through the transamidation of misacylated Glu-tRNA(Gln) in organisms which lack glutaminyl-tRNA synthetase. The reaction takes place in the presence of glutamine and ATP through an activated gamma-phospho-Glu-tRNA(Gln). The protein is Glutamyl-tRNA(Gln) amidotransferase subunit A of Synechococcus sp. (strain JA-3-3Ab) (Cyanobacteria bacterium Yellowstone A-Prime).